The sequence spans 359 residues: Malonyl-CoA reductase (359 aa).

16–19 (TGLV) lines the NADP(+) pocket. Residue cysteine 153 is the Acyl-thioester intermediate of the active site. 183 to 184 (SG) serves as a coordination point for NADP(+). Catalysis depends on histidine 248, which acts as the Proton acceptor. Residue 335 to 336 (NT) coordinates NADP(+).

The protein belongs to the aspartate-semialdehyde dehydrogenase family. Homodimer and possibly a tetramer. Mg(2+) serves as cofactor. Mn(2+) is required as a cofactor.

The catalysed reaction is 3-oxopropanoate + NADP(+) + CoA = malonyl-CoA + NADPH + H(+). With respect to regulation, activated by dithioerythritol (5 mM) and inhibited by the thiol-blocking agent iodoacetamide (0.1 mM). Catalyzes the reduction of malonyl-CoA to malonate semialdehyde, a key step in the 3-hydroxypropanoate and the 3-hydroxypropanoate/4-hydroxybutyrate cycles. Can also use succinyl-CoA and succinate semialdehyde as substrates but at a lower rate than malonyl-CoA. This Sulfurisphaera tokodaii (strain DSM 16993 / JCM 10545 / NBRC 100140 / 7) (Sulfolobus tokodaii) protein is Malonyl-CoA reductase (mcr).